A 143-amino-acid chain; its full sequence is Peptide methionine sulfoxide reductase B9 (143 aa).

Residues 19 to 140 (DQDWRAILSP…NSVSLKFSEI (122 aa)) enclose the MsrB domain. The Zn(2+) site is built by cysteine 58, cysteine 61, cysteine 104, and cysteine 107. An intrachain disulfide couples cysteine 76 to cysteine 129. Cysteine 129 (nucleophile) is an active-site residue.

This sequence belongs to the MsrB Met sulfoxide reductase family. The cofactor is Zn(2+).

The protein localises to the cytoplasm. Its subcellular location is the cytosol. The catalysed reaction is L-methionyl-[protein] + [thioredoxin]-disulfide + H2O = L-methionyl-(R)-S-oxide-[protein] + [thioredoxin]-dithiol. In terms of biological role, catalyzes the reduction of methionine sulfoxide (MetSO) to methionine in proteins. Plays a protective role against oxidative stress by restoring activity to proteins that have been inactivated by methionine oxidation. MSRB family specifically reduces the MetSO R-enantiomer. The protein is Peptide methionine sulfoxide reductase B9 (MSRB9) of Arabidopsis thaliana (Mouse-ear cress).